A 282-amino-acid polypeptide reads, in one-letter code: Phosphatidylglycerol--prolipoprotein diacylglyceryl transferase (282 aa).

Transmembrane regions (helical) follow at residues 18–38, 56–76, and 89–109; these read IQVH…VALA, ILWA…IFQW, and IWDG…VVIL. Arg137 serves as a coordination point for a 1,2-diacyl-sn-glycero-3-phospho-(1'-sn-glycerol). Residues 237 to 257 form a helical membrane-spanning segment; sequence VIRVSQALSVVLFFGSIGLMI.

Belongs to the Lgt family.

The protein resides in the cell membrane. The catalysed reaction is L-cysteinyl-[prolipoprotein] + a 1,2-diacyl-sn-glycero-3-phospho-(1'-sn-glycerol) = an S-1,2-diacyl-sn-glyceryl-L-cysteinyl-[prolipoprotein] + sn-glycerol 1-phosphate + H(+). It functions in the pathway protein modification; lipoprotein biosynthesis (diacylglyceryl transfer). In terms of biological role, catalyzes the transfer of the diacylglyceryl group from phosphatidylglycerol to the sulfhydryl group of the N-terminal cysteine of a prolipoprotein, the first step in the formation of mature lipoproteins. This Lactiplantibacillus plantarum (strain ATCC BAA-793 / NCIMB 8826 / WCFS1) (Lactobacillus plantarum) protein is Phosphatidylglycerol--prolipoprotein diacylglyceryl transferase.